We begin with the raw amino-acid sequence, 1071 residues long: SLIT-ROBO Rho GTPase-activating protein 2 (1071 aa).

One can recognise an F-BAR domain in the interval 22–325; the sequence is KEIRAQLTEQ…AVENLDATSD (304 aa). The segment covering 181–203 has biased composition (basic and acidic residues); that stretch reads LKEAEKQEEKQIGKSVKQEDRQT. Positions 181-211 are disordered; the sequence is LKEAEKQEEKQIGKSVKQEDRQTPRSPDSTA. At Ser206 the chain carries Phosphoserine. Positions 363 to 401 form a coiled coil; it reads QSELVQRCQQLQSRLSTLKIENEEVKKTMEATLQTIQDI. Residues Ser427, Ser500, Ser691, and Ser695 each carry the phosphoserine modification. Residues 489–679 enclose the Rho-GAP domain; that stretch reads ARRSSTVRKQ…TIIIQHENIF (191 aa). Residues 700–726 are disordered; the sequence is CDSTHGETTSAEDSTQDVTAEHHTSDD. Over residues 705 to 717 the composition is skewed to polar residues; sequence GETTSAEDSTQDV. The residue at position 724 (Ser724) is a Phosphoserine. Positions 728–787 constitute an SH3 domain; the sequence is CEPIEAIAKFDYVGRTARELSFKKGASLLLYQRASDDWWEGRHNGIDGLIPHQYIVVQDT. Ser795 bears the Phosphoserine mark. Disordered stretches follow at residues 795–819 and 838–918; these read SSPKSEIEVMSEPPEEKVTARTGAS and RKRP…DSPQ. Residues 855–868 show a composition bias toward low complexity; it reads HGLGSSLTDSSSLG. 2 stretches are compositionally biased toward polar residues: residues 874–885 and 897–907; these read RPSSQPIMSQNL and GHGSLNSISRH. Phosphoserine is present on Ser916. Residue Arg927 is modified to Symmetric dimethylarginine; by PRMT5. Ser930 bears the Phosphoserine mark. The stretch at 940–968 forms a coiled coil; it reads EVIAQDIEATMNSALNELQELERQSSAKH. Positions 984–1012 are disordered; sequence PVVAPTSEPSSPLHTQLLKDPEPAFQRSA. 4 positions are modified to phosphoserine: Ser990, Ser994, Ser1013, and Ser1027. A disordered region spans residues 1029–1071; sequence KMAAPVKPPATRPKPTVFPKTNATSPGVNSSASPQATDKSCTV. Residues 1047-1071 are compositionally biased toward polar residues; sequence PKTNATSPGVNSSASPQATDKSCTV.

Homodimer. Forms a heterooligomer with SRGAP1 and SRGAP3 through its F-BAR domain. Interacts (via SH3 domain) with GPHN. Interacts (via SH3 domain) with FMNL1 (activated by RAC1); regulates the actin filament severing activity of FMNL1 and actin dynamics. Interacts (via SH3 domain) with FMNL3. Interacts with RAC1; specifically stimulates RAC1 GTPase activity. Interacts (via F-BAR domain) with HOMER1. Interacts with ROBO1 and ROBO2. Interacts with FASLG. Interacts with PRMT5. In terms of processing, methylation at Arg-927 is required for the stimulation of cell migration, dimerization and localization at the plasma membrane protrusions.

It localises to the cell membrane. The protein localises to the cell projection. The protein resides in the dendritic spine. It is found in the postsynaptic density. Its subcellular location is the postsynaptic cell membrane. It localises to the lamellipodium. The protein localises to the cytoplasmic vesicle. The protein resides in the phagosome. It is found in the nucleus. Its subcellular location is the cytoplasm. It localises to the cytosol. Functionally, postsynaptic RAC1 GTPase activating protein (GAP) that plays a key role in neuronal morphogenesis and migration mainly during development of the cerebral cortex. Regulates excitatory and inhibitory synapse maturation and density in cortical pyramidal neurons. SRGAP2/SRGAP2A limits excitatory and inhibitory synapse density through its RAC1-specific GTPase activating activity, while it promotes maturation of both excitatory and inhibitory synapses through its ability to bind to the postsynaptic scaffolding protein HOMER1 at excitatory synapses, and the postsynaptic protein GPHN at inhibitory synapses. Mechanistically, acts by binding and deforming membranes, thereby regulating actin dynamics to regulate cell migration and differentiation. Promotes cell repulsion and contact inhibition of locomotion: localizes to protrusions with curved edges and controls the duration of RAC1 activity in contact protrusions. In non-neuronal cells, may also play a role in cell migration by regulating the formation of lamellipodia and filopodia. The protein is SLIT-ROBO Rho GTPase-activating protein 2 of Mus musculus (Mouse).